Here is a 638-residue protein sequence, read N- to C-terminus: Threonine--tRNA ligase (638 aa).

In terms of domain architecture, TGS spans 1–61; sequence MPVITLPDGS…EHDARIEIVT (61 aa). Residues 243–534 form a catalytic region; sequence DHRKIAKAQD…LIEEYAGHFP (292 aa). Positions 334, 385, and 511 each coordinate Zn(2+).

It belongs to the class-II aminoacyl-tRNA synthetase family. Homodimer. The cofactor is Zn(2+).

Its subcellular location is the cytoplasm. The enzyme catalyses tRNA(Thr) + L-threonine + ATP = L-threonyl-tRNA(Thr) + AMP + diphosphate + H(+). Catalyzes the attachment of threonine to tRNA(Thr) in a two-step reaction: L-threonine is first activated by ATP to form Thr-AMP and then transferred to the acceptor end of tRNA(Thr). Also edits incorrectly charged L-seryl-tRNA(Thr). This chain is Threonine--tRNA ligase, found in Idiomarina loihiensis (strain ATCC BAA-735 / DSM 15497 / L2-TR).